We begin with the raw amino-acid sequence, 381 residues long: Molybdenum import ATP-binding protein ModC (381 aa).

An ABC transporter domain is found at 5–238 (SRSIQAQFRG…PALPLAASRD (234 aa)). 37 to 44 (GPSGCGKS) contacts ATP. Residues 297-367 (NTSILNVLPA…VKGVALAPGR (71 aa)) form the Mop domain.

The protein belongs to the ABC transporter superfamily. Molybdate importer (TC 3.A.1.8) family. The complex is composed of two ATP-binding proteins (ModC), two transmembrane proteins (ModB) and a solute-binding protein (ModA).

The protein resides in the cell inner membrane. It catalyses the reaction molybdate(out) + ATP + H2O = molybdate(in) + ADP + phosphate + H(+). In terms of biological role, part of the ABC transporter complex ModABC involved in molybdenum import. Responsible for energy coupling to the transport system. The sequence is that of Molybdenum import ATP-binding protein ModC from Rhodopseudomonas palustris (strain BisB18).